Here is a 120-residue protein sequence, read N- to C-terminus: NAD(P)H-quinone oxidoreductase subunit 3, chloroplastic (120 aa).

The next 3 helical transmembrane spans lie at 9-29 (IFWA…IISG), 60-80 (ICYY…VFLY), and 88-108 (ILGV…IVGS).

Belongs to the complex I subunit 3 family. In terms of assembly, NDH is composed of at least 16 different subunits, 5 of which are encoded in the nucleus.

It is found in the plastid. The protein localises to the chloroplast thylakoid membrane. The catalysed reaction is a plastoquinone + NADH + (n+1) H(+)(in) = a plastoquinol + NAD(+) + n H(+)(out). It catalyses the reaction a plastoquinone + NADPH + (n+1) H(+)(in) = a plastoquinol + NADP(+) + n H(+)(out). Its function is as follows. NDH shuttles electrons from NAD(P)H:plastoquinone, via FMN and iron-sulfur (Fe-S) centers, to quinones in the photosynthetic chain and possibly in a chloroplast respiratory chain. The immediate electron acceptor for the enzyme in this species is believed to be plastoquinone. Couples the redox reaction to proton translocation, and thus conserves the redox energy in a proton gradient. This chain is NAD(P)H-quinone oxidoreductase subunit 3, chloroplastic, found in Morus indica (Mulberry).